The primary structure comprises 358 residues: Phospho-N-acetylmuramoyl-pentapeptide-transferase (358 aa).

A run of 10 helical transmembrane segments spans residues 26-46 (TIYA…WIIR), 71-91 (TPTM…LLWA), 93-113 (LTNV…LIGF), 134-154 (MFWQ…TPGF), 170-190 (LGIF…NAVN), 197-217 (GLAI…AYVA), 234-254 (AGEL…FLWF), 261-281 (VFMG…IAVL), 286-306 (ILLV…IFQV), and 335-355 (KIIV…ISTL).

This sequence belongs to the glycosyltransferase 4 family. MraY subfamily. Requires Mg(2+) as cofactor.

The protein resides in the cell inner membrane. The catalysed reaction is UDP-N-acetyl-alpha-D-muramoyl-L-alanyl-gamma-D-glutamyl-meso-2,6-diaminopimeloyl-D-alanyl-D-alanine + di-trans,octa-cis-undecaprenyl phosphate = di-trans,octa-cis-undecaprenyl diphospho-N-acetyl-alpha-D-muramoyl-L-alanyl-D-glutamyl-meso-2,6-diaminopimeloyl-D-alanyl-D-alanine + UMP. It functions in the pathway cell wall biogenesis; peptidoglycan biosynthesis. Catalyzes the initial step of the lipid cycle reactions in the biosynthesis of the cell wall peptidoglycan: transfers peptidoglycan precursor phospho-MurNAc-pentapeptide from UDP-MurNAc-pentapeptide onto the lipid carrier undecaprenyl phosphate, yielding undecaprenyl-pyrophosphoryl-MurNAc-pentapeptide, known as lipid I. The chain is Phospho-N-acetylmuramoyl-pentapeptide-transferase from Trichlorobacter lovleyi (strain ATCC BAA-1151 / DSM 17278 / SZ) (Geobacter lovleyi).